Consider the following 629-residue polypeptide: Keratin, type II cytoskeletal 3 (629 aa).

Positions 1 to 182 are head; the sequence is MNRQVCKTSG…DPQIGQVRAQ (182 aa). Serine 13 and serine 62 each carry phosphoserine. The segment at 183-218 is coil 1A; it reads EREQIKTLNNKFASFIDKVRFLEQQNKVLETKWELL. The IF rod domain occupies 183–498; it reads EREQIKTLNN…KLLEGEESRM (316 aa). Residues 219-239 form a linker 1 region; sequence QRQGPNSVTGTNNLEPLFENR. The segment at 240–331 is coil 1B; the sequence is INYLRSYLDS…TLYDAELSQM (92 aa). Lysine 281 is subject to N6,N6-dimethyllysine. Residues 332–355 form a linker 12 region; the sequence is QSHVSDMSVVLSMDNNRSLDLDSI. Serine 349 bears the Phosphoserine mark. Residues 356-494 form a coil 2 region; that stretch reads IAEVRAQYED…ATYRKLLEGE (139 aa). The segment at 495-629 is tail; it reads ESRMSGECQS…FSQSSQRYSR (135 aa). The tract at residues 603 to 629 is disordered; sequence SGGGFSSGSSSRGSSVKFSQSSQRYSR. The segment covering 618-629 has biased composition (polar residues); it reads VKFSQSSQRYSR.

The protein belongs to the intermediate filament family. In terms of assembly, heterotetramer of two type I and two type II keratins. Keratin-3 associates with keratin-12. Cornea specific. Expressed in the basal cells of corneal epithelium and stroma. Also expressed in esophageal epithelium.

This chain is Keratin, type II cytoskeletal 3 (KRT3), found in Oryctolagus cuniculus (Rabbit).